We begin with the raw amino-acid sequence, 183 residues long: Adenylate kinase (183 aa).

12-17 (GAGKGT) lines the ATP pocket. The interval 32–61 (STGDLLRSEVAAGTALGQEAEAVMNRGELV) is NMP. Residues threonine 33, arginine 38, 59–61 (ELV), 86–89 (GFPR), and glutamine 93 contribute to the AMP site. The segment at 127-133 (ARGRDDD) is LID. Arginine 128 serves as a coordination point for ATP. The AMP site is built by arginine 130 and arginine 141. Position 169 (glycine 169) interacts with ATP.

This sequence belongs to the adenylate kinase family. As to quaternary structure, monomer.

The protein resides in the cytoplasm. The catalysed reaction is AMP + ATP = 2 ADP. The protein operates within purine metabolism; AMP biosynthesis via salvage pathway; AMP from ADP: step 1/1. Catalyzes the reversible transfer of the terminal phosphate group between ATP and AMP. Plays an important role in cellular energy homeostasis and in adenine nucleotide metabolism. The chain is Adenylate kinase from Parasynechococcus marenigrum (strain WH8102).